The primary structure comprises 549 residues: Capsid vertex component 2 (549 aa).

The segment at 1 to 54 (MLTSERSYLRYPKNRRWTEAGRFWAPHPENVLFIHKPTMEETRRVALGLRSQLV) is interaction with major capsid protein/MCP.

Belongs to the herpesviridae CVC2 protein family. Heterodimerizes with CVC1. Interacts with major capsid protein/MCP and triplex capsid protein 1/TRX1 at the pentamer vertices. Interacts with the large tegument protein/LTP.

The protein resides in the virion. The protein localises to the host nucleus. Capsid vertex-specific component that plays a role during viral DNA encapsidation, assuring correct genome cleavage and presumably stabilizing capsids that contain full-length viral genomes. Participates in the interaction between the capsid and the tegument through interaction with the large tegument protein/LTP. This chain is Capsid vertex component 2, found in Human herpesvirus 8 type P (isolate GK18) (HHV-8).